Consider the following 479-residue polypeptide: F-box protein At5g51380 (479 aa).

The interval 1–20 (MTFREKMPTSPKSPLRRRRS) is disordered. Positions 62 to 108 (DRTLSLSDSLLLKILEKLPESQNEDVSLVCKRWLSVQGRRLRSMKVF) constitute an F-box domain.

This is F-box protein At5g51380 from Arabidopsis thaliana (Mouse-ear cress).